A 793-amino-acid chain; its full sequence is Neurobeachin (793 aa).

Disordered regions lie at residues 68-92 (ENIK…TGAK) and 685-793 (RETA…EILK). 4 stretches are compositionally biased toward polar residues: residues 77–90 (NVST…QTTG), 689–710 (RSGS…STET), 750–762 (NILN…TSTG), and 782–793 (ESLTESPSEILK).

It belongs to the WD repeat neurobeachin family. In terms of assembly, interacts with RII subunit of PKA. Forebrain and cerebellum.

It localises to the cytoplasm. Its subcellular location is the membrane. Its function is as follows. Binds to type II regulatory subunits of protein kinase A and anchors/targets them to the membrane. May anchor the kinase to cytoskeletal and/or organelle-associated proteins. This chain is Neurobeachin (NBEA), found in Gallus gallus (Chicken).